We begin with the raw amino-acid sequence, 155 residues long: Small ribosomal subunit protein uS7cz/uS7cy (155 aa).

The protein belongs to the universal ribosomal protein uS7 family. In terms of assembly, part of the 30S ribosomal subunit.

It localises to the plastid. The protein resides in the chloroplast. Functionally, one of the primary rRNA binding proteins, it binds directly to 16S rRNA where it nucleates assembly of the head domain of the 30S subunit. The sequence is that of Small ribosomal subunit protein uS7cz/uS7cy (rps7-A) from Amborella trichopoda.